Consider the following 323-residue polypeptide: Sphingolipid delta(4)-desaturase DES1 (323 aa).

2 helical membrane-spanning segments follow: residues 41-61 (YNLIWVVMLMVAAQLTAFYLV) and 68-88 (WVVFWAYVFGSCISHSMTLAI). Positions 89–93 (HEISH) match the Histidine box-1 motif. A helical transmembrane segment spans residues 102 to 122 (AMWNRWFGIFANLPLGLPYSI). The Histidine box-2 motif lies at 128–132 (HMDHH). 3 consecutive transmembrane segments (helical) span residues 159 to 179 (KFIWIVLQPFFYAIRPLCINP), 185 to 205 (LEIINLLAQLFFDIVIYYLWG), and 209 to 229 (IFYMLAGSVLGLGLHPISGHF). A Histidine box-3 motif is present at residues 259 to 263 (HNEHH).

It belongs to the fatty acid desaturase type 1 family. DEGS subfamily. As to quaternary structure, interacts with RLBP1; the interaction increases synthesis of chromophore-precursors by DEGS1. As to expression, expressed in retina and retinal pigment epithelium by Mueller cells (at protein level).

It localises to the endoplasmic reticulum membrane. It carries out the reaction an N-acylsphinganine + 2 Fe(II)-[cytochrome b5] + O2 + 2 H(+) = an N-acylsphing-4-enine + 2 Fe(III)-[cytochrome b5] + 2 H2O. The enzyme catalyses all-trans-retinol = 11-cis-retinol. It catalyses the reaction all-trans-retinol = 9-cis-retinol. The catalysed reaction is all-trans-retinol = 13-cis-retinol. It carries out the reaction 11-cis-retinol = 13-cis-retinol. The enzyme catalyses 11-cis-retinol = 9-cis-retinol. In terms of biological role, has sphingolipid-delta-4-desaturase activity. Converts D-erythro-sphinganine to D-erythro-sphingosine (E-sphing-4-enine). Catalyzes the equilibrium isomerization of retinols. This Gallus gallus (Chicken) protein is Sphingolipid delta(4)-desaturase DES1 (DEGS1).